Consider the following 104-residue polypeptide: Large ribosomal subunit protein uL24 (104 aa).

It belongs to the universal ribosomal protein uL24 family. Part of the 50S ribosomal subunit.

In terms of biological role, one of two assembly initiator proteins, it binds directly to the 5'-end of the 23S rRNA, where it nucleates assembly of the 50S subunit. One of the proteins that surrounds the polypeptide exit tunnel on the outside of the subunit. This Escherichia coli O81 (strain ED1a) protein is Large ribosomal subunit protein uL24.